A 523-amino-acid chain; its full sequence is Sorting nexin-2 (523 aa).

Positions 1–104 (MAAEREPPPL…EPSPAVTPVT (104 aa)) are disordered. Low complexity-rich tracts occupy residues 27-50 (LFTSTVSTLESSPSSPEPASLPAE) and 93-104 (SSEPSPAVTPVT). The residue at position 97 (Ser97) is a Phosphoserine. Phosphothreonine occurs at positions 101 and 104. 2 positions are modified to phosphoserine: Ser117 and Ser119. The PX domain occupies 140 to 269 (FDIEIGVSDP…QFLESSELPR (130 aa)). Residues Arg183, Ser185, Lys211, and Arg235 each coordinate a 1,2-diacyl-sn-glycero-3-phospho-(1D-myo-inositol-3-phosphate). The residue at position 185 (Ser185) is a Phosphoserine. The interval 260–523 (QFLESSELPR…AFLPEAKAIA (264 aa)) is interaction with RhoG. Position 277 is a phosphoserine (Ser277). The tract at residues 278 to 295 (GAGILRMVNKAADAVNKM) is membrane-binding amphipathic helix. Positions 299 to 523 (MNESDAWFEE…AFLPEAKAIA (225 aa)) constitute a BAR domain. Lys473 bears the N6-acetyllysine mark.

This sequence belongs to the sorting nexin family. Predominantly forms heterodimers with BAR domain-containing sorting nexins SNX5, SNX6 and SNX32; can self-associate to form homodimers. The heterodimers are proposed to self-assemble into helical arrays on the membrane to stabilize and expand local membrane curvature underlying endosomal tubule formation. Thought to be a component of the originally described retromer complex (also called SNX-BAR retromer) which is a pentamer containing the heterotrimeric retromer cargo-selective complex (CSC), also described as vacuolar protein sorting subcomplex (VPS), and a heterodimeric membrane-deforming subcomplex formed between SNX1 or SNX2 and SNX5 or SNX6 (also called SNX-BAR subcomplex); the respective CSC and SNX-BAR subcomplexes associate with low affinity. Interacts with SNX5, SNX6, SNX32, VPS26A, VPS29, VPS35, FNBP1, KALRN, RHOG (GDP-bound form).

It is found in the early endosome membrane. The protein resides in the cell projection. The protein localises to the lamellipodium. In terms of biological role, involved in several stages of intracellular trafficking. Interacts with membranes containing phosphatidylinositol 3-phosphate (PtdIns(3P)) or phosphatidylinositol 3,5-bisphosphate (PtdIns(3,5)P2). Acts in part as component of the retromer membrane-deforming SNX-BAR subcomplex. The SNX-BAR retromer mediates retrograde transport of cargo proteins from endosomes to the trans-Golgi network (TGN) and is involved in endosome-to-plasma membrane transport for cargo protein recycling. The SNX-BAR subcomplex functions to deform the donor membrane into a tubular profile called endosome-to-TGN transport carrier (ETC). Can sense membrane curvature and has in vitro vesicle-to-membrane remodeling activity. Required for retrograde endosome-to-TGN transport of TGN38. Promotes KALRN- and RHOG-dependent but retromer-independent membrane remodeling such as lamellipodium formation; the function is dependent on GEF activity of KALRN. The sequence is that of Sorting nexin-2 (SNX2) from Macaca fascicularis (Crab-eating macaque).